The following is a 129-amino-acid chain: Small ribosomal subunit protein uS11 (129 aa).

Belongs to the universal ribosomal protein uS11 family. As to quaternary structure, part of the 30S ribosomal subunit. Interacts with proteins S7 and S18. Binds to IF-3.

In terms of biological role, located on the platform of the 30S subunit, it bridges several disparate RNA helices of the 16S rRNA. Forms part of the Shine-Dalgarno cleft in the 70S ribosome. The sequence is that of Small ribosomal subunit protein uS11 from Parabacteroides distasonis (strain ATCC 8503 / DSM 20701 / CIP 104284 / JCM 5825 / NCTC 11152).